The following is a 336-amino-acid chain: MIQKNWQELIKPSKIEFTSKGRTQTNLVAEPLERGFGLTLGNALRRVLLSSLRGAAVTAVQIDGVLHEFSSIAGVREDVTDIVLNIKEIAIRMEGDGPKRMVLRKQGPGAVTAGDIQTVGDVEILNPEHVICTLDQGAEIRMEFTVNTGKGYVPADRNRAEDAPIGLIPVDSLYSPVKKVSYKVENTREGQVLDYDKLTMTIETDGSVTGEDAVAFAARILQDQLGLFVNFEEPQKEVPAEQVTELAFNPALLKKVDELELSVRSANCLKNDNIVYIGDLIQKTEAEMLRTPNFGRKSLNEIKEVLASMGLHLGMEVPDWPPDNIEELAKRYEDQY.

The segment at 1 to 232 (MIQKNWQELI…DQLGLFVNFE (232 aa)) is alpha N-terminal domain (alpha-NTD). The interval 248 to 336 (FNPALLKKVD…ELAKRYEDQY (89 aa)) is alpha C-terminal domain (alpha-CTD).

The protein belongs to the RNA polymerase alpha chain family. As to quaternary structure, homodimer. The RNAP catalytic core consists of 2 alpha, 1 beta, 1 beta' and 1 omega subunit. When a sigma factor is associated with the core the holoenzyme is formed, which can initiate transcription.

The enzyme catalyses RNA(n) + a ribonucleoside 5'-triphosphate = RNA(n+1) + diphosphate. DNA-dependent RNA polymerase catalyzes the transcription of DNA into RNA using the four ribonucleoside triphosphates as substrates. The polypeptide is DNA-directed RNA polymerase subunit alpha (Chelativorans sp. (strain BNC1)).